We begin with the raw amino-acid sequence, 375 residues long: UDP-N-acetylglucosamine--N-acetylmuramyl-(pentapeptide) pyrophosphoryl-undecaprenol N-acetylglucosamine transferase (375 aa).

Residues 13-15, N124, R165, S193, and Q294 each bind UDP-N-acetyl-alpha-D-glucosamine; that span reads TGG.

It belongs to the glycosyltransferase 28 family. MurG subfamily.

The protein localises to the cell inner membrane. It catalyses the reaction di-trans,octa-cis-undecaprenyl diphospho-N-acetyl-alpha-D-muramoyl-L-alanyl-D-glutamyl-meso-2,6-diaminopimeloyl-D-alanyl-D-alanine + UDP-N-acetyl-alpha-D-glucosamine = di-trans,octa-cis-undecaprenyl diphospho-[N-acetyl-alpha-D-glucosaminyl-(1-&gt;4)]-N-acetyl-alpha-D-muramoyl-L-alanyl-D-glutamyl-meso-2,6-diaminopimeloyl-D-alanyl-D-alanine + UDP + H(+). It participates in cell wall biogenesis; peptidoglycan biosynthesis. Its function is as follows. Cell wall formation. Catalyzes the transfer of a GlcNAc subunit on undecaprenyl-pyrophosphoryl-MurNAc-pentapeptide (lipid intermediate I) to form undecaprenyl-pyrophosphoryl-MurNAc-(pentapeptide)GlcNAc (lipid intermediate II). The polypeptide is UDP-N-acetylglucosamine--N-acetylmuramyl-(pentapeptide) pyrophosphoryl-undecaprenol N-acetylglucosamine transferase (Mesorhizobium japonicum (strain LMG 29417 / CECT 9101 / MAFF 303099) (Mesorhizobium loti (strain MAFF 303099))).